The following is a 180-amino-acid chain: Large ribosomal subunit protein uL5 (180 aa).

This sequence belongs to the universal ribosomal protein uL5 family. Part of the 50S ribosomal subunit; part of the 5S rRNA/L5/L18/L25 subcomplex. Contacts the 5S rRNA and the P site tRNA. Forms a bridge to the 30S subunit in the 70S ribosome.

Functionally, this is one of the proteins that bind and probably mediate the attachment of the 5S RNA into the large ribosomal subunit, where it forms part of the central protuberance. In the 70S ribosome it contacts protein S13 of the 30S subunit (bridge B1b), connecting the 2 subunits; this bridge is implicated in subunit movement. Contacts the P site tRNA; the 5S rRNA and some of its associated proteins might help stabilize positioning of ribosome-bound tRNAs. In Stenotrophomonas maltophilia (strain R551-3), this protein is Large ribosomal subunit protein uL5.